Consider the following 452-residue polypeptide: Gastrin/cholecystokinin type B receptor (452 aa).

At Met-1–Arg-55 the chain is on the extracellular side. N-linked (GlcNAc...) asparagine glycans are attached at residues Asn-7, Asn-28, and Asn-34. Residues Val-56–Leu-77 traverse the membrane as a helical segment. Residues Gly-78–Thr-85 lie on the Cytoplasmic side of the membrane. The helical transmembrane segment at Val-86 to Pro-107 threads the bilayer. The Extracellular segment spans residues Phe-108–Ser-129. An intrachain disulfide couples Cys-125 to Cys-203. A helical transmembrane segment spans residues Tyr-130–Leu-148. Residues Glu-149–His-168 are Cytoplasmic-facing. The chain crosses the membrane as a helical span at residues Ala-169 to Tyr-187. The Extracellular segment spans residues Pro-188–Ser-217. Residues Val-218–Ser-240 form a helical membrane-spanning segment. Topologically, residues Arg-241–Arg-338 are cytoplasmic. Residues Ser-255–Glu-285 are disordered. A compositionally biased stretch (gly residues) spans Gly-263–Ala-272. Residues Met-339–Trp-360 form a helical membrane-spanning segment. The Extracellular segment spans residues Arg-361–Ser-378. Residues Phe-379–His-399 traverse the membrane as a helical segment. At Arg-400–Gly-452 the chain is on the cytoplasmic side. Cys-413 carries S-palmitoyl cysteine lipidation.

This sequence belongs to the G-protein coupled receptor 1 family.

It is found in the cell membrane. Its function is as follows. Receptor for gastrin and cholecystokinin. The CCK-B receptors occur throughout the central nervous system where they modulate anxiety, analgesia, arousal, and neuroleptic activity. This receptor mediates its action by association with G proteins that activate a phosphatidylinositol-calcium second messenger system. This chain is Gastrin/cholecystokinin type B receptor (CCKBR), found in Oryctolagus cuniculus (Rabbit).